We begin with the raw amino-acid sequence, 284 residues long: tRNA uridine(34) hydroxylase (284 aa).

One can recognise a Rhodanese domain in the interval Ala132 to Tyr226. The active-site Cysteine persulfide intermediate is Cys186.

This sequence belongs to the TrhO family.

It catalyses the reaction uridine(34) in tRNA + AH2 + O2 = 5-hydroxyuridine(34) in tRNA + A + H2O. Functionally, catalyzes oxygen-dependent 5-hydroxyuridine (ho5U) modification at position 34 in tRNAs. The protein is tRNA uridine(34) hydroxylase of Burkholderia ambifaria (strain MC40-6).